We begin with the raw amino-acid sequence, 375 residues long: ELAV-like protein 2 (375 aa).

3 consecutive RRM domains span residues 67 to 145 (TNLI…YARP), 153 to 233 (ANLY…FANN), and 292 to 370 (WCIF…FKTS).

The protein belongs to the RRM elav family. In terms of assembly, part of a ribonucleoprotein (RNP) complex, at least composed of elavl1/elrA and/or elavl2/elrB, igf2bp3/vg1RBP, ddx6/Xp54, ybx2/frgy2, lsm14b/rap55b and, in a subset of RNP complexes, stau1/staufen. Binds RNA as a homooligomer.

The protein resides in the cytoplasm. It is found in the cell cortex. Binds to poly-U elements and AU-rich elements (AREs) in the 3'-UTR of target mRNAs. Required for the vegetal localization of vg1 mRNA. Probably required for nervous system development. This is ELAV-like protein 2 from Xenopus tropicalis (Western clawed frog).